The sequence spans 98 residues: DVTVKLGADSGALVFEPSSVTIKAGETVTWVNNAGFPHNIVFDEDEVPSGANAEALSHEDYLNAPGESYSAKFDTAGTYGYFCEPHQGAGMKGTITVQ.

The region spanning 1 to 98 (DVTVKLGADS…AGMKGTITVQ (98 aa)) is the Plastocyanin-like domain. Residues His-38, Cys-83, His-86, and Met-91 each coordinate Cu cation.

It belongs to the plastocyanin family. Requires Cu(2+) as cofactor.

The protein resides in the plastid. It is found in the chloroplast thylakoid membrane. Functionally, participates in electron transfer between P700 and the cytochrome b6-f complex in photosystem I. This is Plastocyanin (petE) from Scenedesmus fuscus (Green alga).